A 1194-amino-acid polypeptide reads, in one-letter code: Multidrug efflux ATP-binding/permease protein Rv0194 (1194 aa).

6 consecutive transmembrane segments (helical) span residues 20–40 (LLLGFGAALAGTVIAVLVPLV), 56–76 (LAPWAVVLVAAAGATYLLMYV), 130–150 (LLFDVPNVLRHVLTLLLGVAV), 153–173 (WLSVPLALLAVLLVPVIGLIA), 258–278 (FALGGWMAAQGSITVGTFVAF), and 279–299 (WACLTLLARPACDLAGMLTIA). The region spanning 21–301 (LLGFGAALAG…LAGMLTIAQQ (281 aa)) is the ABC transmembrane type-1 1 domain. The 235-residue stretch at 334 to 568 (LEFQRVSFGY…CPRYRELLSP (235 aa)) folds into the ABC transporter 1 domain. 367–374 (GAPGSGKS) contributes to the ATP binding site. The next 6 helical transmembrane spans lie at 628-648 (ALSLLLVAVQTCAGLLPPLLI), 660-680 (VLSALWWAALAGTATVVIRWV), 743-763 (LVVAVISVVTLVGILVALLAI), 765-785 (ARLVLLIFTTMPVLALATWQF), 847-867 (LLALYYPFVALLCSLATTLVL), and 878-898 (VISVGALVTYLLYIELLYTPI). Positions 628–910 (ALSLLLVAVQ…LAQMFDDYQR (283 aa)) constitute an ABC transmembrane type-1 2 domain. The ABC transporter 2 domain maps to 942-1177 (VVFDAVHYSY…GGHYSRLWAA (236 aa)). Residue 976–983 (GSTGSGKS) coordinates ATP.

Belongs to the ABC transporter superfamily. Lipid exporter (TC 3.A.1.106) family.

The protein localises to the cell inner membrane. With respect to regulation, efflux is inhibited by reserpine. Its function is as follows. Overexpression in M.smegmatis increases resistance to erythromycin, ampicillin, novobiocin and vancomycin. It also reduces accumulation of ethidium bromide in the cell. This chain is Multidrug efflux ATP-binding/permease protein Rv0194, found in Mycobacterium tuberculosis (strain ATCC 25618 / H37Rv).